The following is a 158-amino-acid chain: Protein EOLA2 (158 aa).

Residues 6 to 92 (LSFRQPYAGF…IAGLVDIGET (87 aa)) form the ASCH domain.

It belongs to the EOLA family.

In Homo sapiens (Human), this protein is Protein EOLA2.